Consider the following 55-residue polypeptide: Large ribosomal subunit protein bL33 (55 aa).

The protein belongs to the bacterial ribosomal protein bL33 family.

The chain is Large ribosomal subunit protein bL33 from Pseudarthrobacter chlorophenolicus (strain ATCC 700700 / DSM 12829 / CIP 107037 / JCM 12360 / KCTC 9906 / NCIMB 13794 / A6) (Arthrobacter chlorophenolicus).